The primary structure comprises 337 residues: tRNA N6-adenosine threonylcarbamoyltransferase (337 aa).

Fe cation-binding residues include H111 and H115. Residues 134 to 138, D167, G180, and N272 contribute to the substrate site; that span reads LVSGG. D300 contributes to the Fe cation binding site.

This sequence belongs to the KAE1 / TsaD family. Requires Fe(2+) as cofactor.

The protein resides in the cytoplasm. The enzyme catalyses L-threonylcarbamoyladenylate + adenosine(37) in tRNA = N(6)-L-threonylcarbamoyladenosine(37) in tRNA + AMP + H(+). In terms of biological role, required for the formation of a threonylcarbamoyl group on adenosine at position 37 (t(6)A37) in tRNAs that read codons beginning with adenine. Is involved in the transfer of the threonylcarbamoyl moiety of threonylcarbamoyl-AMP (TC-AMP) to the N6 group of A37, together with TsaE and TsaB. TsaD likely plays a direct catalytic role in this reaction. The sequence is that of tRNA N6-adenosine threonylcarbamoyltransferase from Shewanella loihica (strain ATCC BAA-1088 / PV-4).